A 380-amino-acid chain; its full sequence is MLTKIAVEKILERALMGYDLSPQEGVVLLQQTEPEAIAAIRATSDTLRHTQAGDMVTYIINRNINFTNICEQHCSFCAFRRDDGDVGAYWLDSAQILEKATDAVRRGATEICMQGGLNPQAQINGKSLPYYLKVVETIKQEFPQIHLHAFSPQEVEFIARLDGLEYADVIIALRDAGVGSMPGTAAEVLDDEVRRILCPEKINTATWLGIVSTAHKLGLHTTSTMLSGHIETHEQQIGHLEKLRSLQQTAINQGYPAKITEFILLPFVGQEAPKPLRRRVGRDQPILSDALLLGAVARIYLGNWIPNHQQSWVKLGLAGATEALVWGCNDIGGTLMEEHITTMAGALGGTCMEVETLKTAIASLGRPYQQRNTLYQKVNS.

The Radical SAM core domain maps to 56 to 303 (VTYIINRNIN…GAVARIYLGN (248 aa)). [4Fe-4S] cluster is bound by residues Cys70, Cys74, and Cys77.

It belongs to the radical SAM superfamily. CofH family. Consists of two subunits, CofG and CofH. The cofactor is [4Fe-4S] cluster.

It carries out the reaction 5-amino-6-(D-ribitylamino)uracil + L-tyrosine + S-adenosyl-L-methionine = 5-amino-5-(4-hydroxybenzyl)-6-(D-ribitylimino)-5,6-dihydrouracil + 2-iminoacetate + 5'-deoxyadenosine + L-methionine + H(+). It participates in cofactor biosynthesis; coenzyme F0 biosynthesis. Catalyzes the radical-mediated synthesis of 5-amino-5-(4-hydroxybenzyl)-6-(D-ribitylimino)-5,6-dihydrouracil from 5-amino-6-(D-ribitylamino)uracil and L-tyrosine. This is 5-amino-6-(D-ribitylamino)uracil--L-tyrosine 4-hydroxyphenyl transferase from Nostoc punctiforme (strain ATCC 29133 / PCC 73102).